The following is a 335-amino-acid chain: Replication factor C subunit 4 (335 aa).

Residue 56 to 63 (SGPPGTGK) coordinates ATP.

The protein belongs to the activator 1 small subunits family. In terms of assembly, heterotetramer of subunits RFC2, RFC3, RFC4 and RFC5 that can form a complex with RFC1. As to expression, expressed in roots, leaves, shoot apical meristem (SAM), flag leaves and panicles.

The protein resides in the nucleus. In terms of biological role, may be involved in DNA replication and thus regulate cell proliferation. The protein is Replication factor C subunit 4 (RFC4) of Oryza sativa subsp. japonica (Rice).